Reading from the N-terminus, the 107-residue chain is MNPETKARIDQLVTANKVMVFMKGTKLMPQCGFSNNVVQILNMLGIPFETLDVLADAEIRQGIKEYSNWPTIPQVYVNGEFVGGSDIMIELYQNGELQEMLEVALAS.

Residues Lys-6–Ser-107 form the Glutaredoxin domain. A glutathione-binding site is contributed by Lys-23. Cys-31 lines the [2Fe-2S] cluster pocket. Glutathione is bound by residues Arg-60 and Ser-85–Asp-86.

The protein belongs to the glutaredoxin family. Monothiol subfamily.

This is an uncharacterized protein from Synechocystis sp. (strain ATCC 27184 / PCC 6803 / Kazusa).